The sequence spans 2885 residues: Chromodomain-helicase-DNA-binding protein 9 (2885 aa).

Residues 173 to 195 form a disordered region; sequence QCSSLHSQQSRSNLNPGQNSLGQ. Residue K197 forms a Glycyl lysine isopeptide (Lys-Gly) (interchain with G-Cter in SUMO2) linkage. 3 disordered regions span residues 242 to 263, 283 to 347, and 479 to 677; these read CSSH…CSVS, SLLQ…QGNY, and CLQR…QPLQ. Composition is skewed to polar residues over residues 243 to 263 and 283 to 310; these read SSHQ…CSVS and SLLQ…NSFS. Positions 323–334 are enriched in low complexity; sequence LLNPTPSLNSNN. Composition is skewed to polar residues over residues 335–347 and 483–505; these read FQIL…QGNY and QPPS…TQVR. K498 is subject to N6-acetyllysine. Basic and acidic residues-rich tracts occupy residues 507–526 and 534–544; these read MSEK…EKAN and ARAKERGERNI. S549 carries the post-translational modification Phosphoserine. Residues 572-592 show a composition bias toward basic and acidic residues; sequence KPKDRDNKKPKTYSKLKEKTK. Residue K595 forms a Glycyl lysine isopeptide (Lys-Gly) (interchain with G-Cter in SUMO2) linkage. Phosphoserine is present on S610. Basic and acidic residues predominate over residues 617 to 630; the sequence is AEQRSQHTFKEQHS. Residues 631 to 643 show a composition bias toward basic residues; that stretch reads QKRRSNRQIKRKK. Positions 644–659 are enriched in basic and acidic residues; it reads YAEDAEGKQSEEEVKG. 2 Chromo domains span residues 689 to 760 and 772 to 838; these read AIVD…HFLA and VEVD…HLDR. Positions 867–871 match the LXXLL motif 1 motif; sequence LNWLL. In terms of domain architecture, Helicase ATP-binding spans 871-1045; that stretch reads LFNWYNRRNC…FSLLHFLEPL (175 aa). 884-891 contacts ATP; that stretch reads DEMGLGKT. The DEAH box signature appears at 996–999; sequence DEAH. Residues 1035 to 1039 carry the LXXLL motif 2 motif; that stretch reads LFSLL. Residues 1185-1336 enclose the Helicase C-terminal domain; the sequence is LIDKLLPKMK…KAVLQSMSGR (152 aa). The disordered stretch occupies residues 1460–1484; it reads KDELAELSEAESEGEEKPKLRRPCD. A compositionally biased stretch (acidic residues) spans 1464–1473; it reads AELSEAESEG. Phosphoserine occurs at positions 1467 and 1471. The segment covering 1474–1484 has biased composition (basic and acidic residues); that stretch reads EEKPKLRRPCD. Residues K1587, K1737, and K1902 each participate in a glycyl lysine isopeptide (Lys-Gly) (interchain with G-Cter in SUMO2) cross-link. S2025 bears the Phosphoserine mark. The LXXLL motif 3 motif lies at 2030-2034; sequence LPRLL. Residue K2037 forms a Glycyl lysine isopeptide (Lys-Gly) (interchain with G-Cter in SUMO2) linkage. A disordered region spans residues 2046–2238; it reads VKSESLTEEP…TQDSFQANNG (193 aa). S2057 and S2058 each carry phosphoserine. K2073 participates in a covalent cross-link: Glycyl lysine isopeptide (Lys-Gly) (interchain with G-Cter in SUMO2). Phosphoserine occurs at positions 2074 and 2078. Polar residues predominate over residues 2083–2092; sequence VLSQATGDQK. The span at 2093 to 2103 shows a compositional bias: basic and acidic residues; that stretch reads SGGKSETDRRM. Over residues 2127-2193 the composition is skewed to low complexity; that stretch reads SQSSSDSDSD…SSSSSSSSSS (67 aa). A compositionally biased stretch (basic and acidic residues) spans 2201-2215; it reads DVQKREGTPHRKAYD. A compositionally biased stretch (polar residues) spans 2220–2238; it reads ASLSTTQDETQDSFQANNG. Residues 2331 to 2471 are binds A/T-rich DNA; sequence QMSKVKKHVR…LSYPQPQRIP (141 aa). Glycyl lysine isopeptide (Lys-Gly) (interchain with G-Cter in SUMO2) cross-links involve residues K2349, K2355, and K2360. An a.T hook-like region spans residues 2428–2435; that stretch reads KKRRGRRR. The disordered stretch occupies residues 2473–2494; it reads TESPVPVINLKDGTRLAGDDAP. Residues 2484-2494 show a composition bias toward basic and acidic residues; that stretch reads DGTRLAGDDAP. Residues 2710–2714 carry the LXXLL motif 4 motif; the sequence is LPNLL. Residues 2724–2770 are disordered; that stretch reads AESGAEEKRGNDSKELEGKKERTESQSPENGGERCVPGSPSTSSTAA. Basic and acidic residues predominate over residues 2728 to 2747; that stretch reads AEEKRGNDSKELEGKKERTE. The LXXLL motif 5 signature appears at 2782–2786; the sequence is LNPLL. A compositionally biased stretch (basic and acidic residues) spans 2818–2847; it reads KNKSDDLDSSKSVEIKEENSRVRDQEEKGG. The tract at residues 2818 to 2885 is disordered; it reads KNKSDDLDSS…SEDSDSSNED (68 aa). K2833 participates in a covalent cross-link: Glycyl lysine isopeptide (Lys-Gly) (interchain with G-Cter in SUMO2). Over residues 2864–2876 the composition is skewed to low complexity; the sequence is RASSGSDSSSSSS.

This sequence belongs to the SNF2/RAD54 helicase family. As to quaternary structure, interacts with PPARA. Probably interacts with ESR1 and NR1I3. In terms of processing, phosphorylated on serine and tyrosine residues. As to expression, expressed in osteoprogenitor cells during development and in mature bone (at protein level).

It localises to the cytoplasm. The protein localises to the nucleus. It catalyses the reaction ATP + H2O = ADP + phosphate + H(+). Probable ATP-dependent chromatin-remodeling factor. Acts as a transcriptional coactivator for PPARA and possibly other nuclear receptors. Has DNA-dependent ATPase activity and binds to A/T-rich DNA. Associates with A/T-rich regulatory regions in promoters of genes that participate in the differentiation of progenitors during osteogenesis. The polypeptide is Chromodomain-helicase-DNA-binding protein 9 (Chd9) (Mus musculus (Mouse)).